The following is a 67-amino-acid chain: Histone H2A (67 aa).

Gln-60 carries the post-translational modification N5-methylglutamine.

The protein belongs to the histone H2A family. The nucleosome is a histone octamer containing two molecules each of H2A, H2B, H3 and H4 assembled in one H3-H4 heterotetramer and two H2A-H2B heterodimers. The octamer wraps approximately 147 bp of DNA.

It is found in the nucleus. It localises to the chromosome. Functionally, core component of nucleosome. Nucleosomes wrap and compact DNA into chromatin, limiting DNA accessibility to the cellular machineries which require DNA as a template. Histones thereby play a central role in transcription regulation, DNA repair, DNA replication and chromosomal stability. DNA accessibility is regulated via a complex set of post-translational modifications of histones, also called histone code, and nucleosome remodeling. This is Histone H2A from Olisthodiscus luteus (Marine phytoflagellate).